Consider the following 435-residue polypeptide: MTSLDPAPNKTWELSLYELQRKPQEVITDSTEIAVSPRSLHSELMCPICLDMLKKTMTTKECLHRFCSDCIVTALRSGNKECPTCRKKLVSKRSLRADPNFDLLISKIYPSREEYEAIQEKVMAKFNQTQSQQALVNSINEGIKLQSQNRPQRFRTKGGGGGGGGGGNGNGAANVAAPPAPGAPTAVGRNASNQMHVHDTASNDSNSNTNSIDRENRDPGHSGTSAASAITSASNAAPSSSANSGASTSATRMQVDDASNPPSVRSTPSPVPSNSSSSKPKRAMSVLTSERSEESESDSQMDCRTEGDSNIDTEGEGNGELGINDEIELVFKPHPTEMSADNQLIRALKENCVRYIKTTANATVDHLSKYLAMRLTLDLGADLPEACRVLNFCIYVAPQPQQLVILNGNQTLHQVNDKFWKVNKPMEMYYSWKKT.

The RING-type zinc finger occupies 46 to 86; that stretch reads CPICLDMLKKTMTTKECLHRFCSDCIVTALRSGNKECPTCR. The tract at residues 144–322 is disordered; that stretch reads KLQSQNRPQR…TEGEGNGELG (179 aa). A compositionally biased stretch (gly residues) spans 157-170; the sequence is KGGGGGGGGGGNGN. Low complexity-rich tracts occupy residues 171–188, 202–211, 222–251, and 259–278; these read GAAN…TAVG, SNDSNSNTNS, SGTS…TSAT, and SNPP…SSSS. Residue S202 is modified to Phosphoserine. Residue S266 is modified to Phosphoserine. Position 267 is a phosphothreonine (T267). S269 bears the Phosphoserine mark. A compositionally biased stretch (acidic residues) spans 309 to 322; it reads SNIDTEGEGNGELG.

As to quaternary structure, interacts with ORD. Component of PRC1 complex, which contains many PcG proteins like Pc, ph, Scm, Psc, Sce and also chromatin remodeling proteins such as histone deacetylases. This complex is distinct from the Esc/E(z) complex, at least composed of esc, E(z), Su(z)12, HDAC1/Rpd3 and Caf1-55. The two complexes however cooperate and interact together during the first 3 hours of development to establish PcG silencing. Ubiquitously expressed in syncytial blastoderm embryos. Ubiquitously expressed until stage 11. Then, it is only expressed in the neuroectoderm. Later in embryonic development, it is only expressed in the CNS. In larvae, it is expressed in all imaginal disks. Expressed in the male and female gonads.

It is found in the nucleus. The protein localises to the chromosome. The enzyme catalyses S-ubiquitinyl-[E2 ubiquitin-conjugating enzyme]-L-cysteine + [acceptor protein]-L-lysine = [E2 ubiquitin-conjugating enzyme]-L-cysteine + N(6)-ubiquitinyl-[acceptor protein]-L-lysine.. It participates in protein modification; protein ubiquitination. E3 ubiquitin-protein ligase that mediates monoubiquitination of 'Lys-118' of histone H2A, thereby playing a central role in histone code and gene regulation. H2A 'Lys-118' ubiquitination gives a specific tag for epigenetic transcriptional repression. Polycomb group (PcG) protein. PcG proteins act by forming multiprotein complexes, which are required to maintain the transcriptionally repressive state of homeotic genes throughout development. PcG proteins are not required to initiate repression, but to maintain it during later stages of development. PcG complexes act via modification of histones, such as methylation, deacetylation, ubiquitination rendering chromatin heritably changed in its expressibility. May play a role in meiotic sister chromatid cohesion. The sequence is that of E3 ubiquitin-protein ligase RING1 (Sce) from Drosophila melanogaster (Fruit fly).